Reading from the N-terminus, the 82-residue chain is Small ribosomal subunit protein bS18 (82 aa).

This sequence belongs to the bacterial ribosomal protein bS18 family. In terms of assembly, part of the 30S ribosomal subunit. Forms a tight heterodimer with protein bS6.

Its function is as follows. Binds as a heterodimer with protein bS6 to the central domain of the 16S rRNA, where it helps stabilize the platform of the 30S subunit. This chain is Small ribosomal subunit protein bS18, found in Bifidobacterium adolescentis (strain ATCC 15703 / DSM 20083 / NCTC 11814 / E194a).